A 485-amino-acid chain; its full sequence is Glutamyl-tRNA(Gln) amidotransferase subunit A (485 aa).

Active-site charge relay system residues include Lys-79 and Ser-154. The active-site Acyl-ester intermediate is the Ser-178.

Belongs to the amidase family. GatA subfamily. As to quaternary structure, heterotrimer of A, B and C subunits.

The catalysed reaction is L-glutamyl-tRNA(Gln) + L-glutamine + ATP + H2O = L-glutaminyl-tRNA(Gln) + L-glutamate + ADP + phosphate + H(+). Allows the formation of correctly charged Gln-tRNA(Gln) through the transamidation of misacylated Glu-tRNA(Gln) in organisms which lack glutaminyl-tRNA synthetase. The reaction takes place in the presence of glutamine and ATP through an activated gamma-phospho-Glu-tRNA(Gln). This chain is Glutamyl-tRNA(Gln) amidotransferase subunit A, found in Bacillus licheniformis (strain ATCC 14580 / DSM 13 / JCM 2505 / CCUG 7422 / NBRC 12200 / NCIMB 9375 / NCTC 10341 / NRRL NRS-1264 / Gibson 46).